We begin with the raw amino-acid sequence, 315 residues long: Type II methyltransferase M.Bsp6I (315 aa).

Residues Leu2–Leu315 enclose the SAM-dependent MTase C5-type domain. Cys73 is an active-site residue.

It belongs to the class I-like SAM-binding methyltransferase superfamily. C5-methyltransferase family.

It catalyses the reaction a 2'-deoxycytidine in DNA + S-adenosyl-L-methionine = a 5-methyl-2'-deoxycytidine in DNA + S-adenosyl-L-homocysteine + H(+). A methylase that recognizes the double-stranded sequence 5'-GCNGC-3', methylates C-? on both strands, and protects the DNA from cleavage by the Bsp6I endonuclease. In Bacillus sp. (strain RFL6), this protein is Type II methyltransferase M.Bsp6I.